Reading from the N-terminus, the 1962-residue chain is PIII-type proteinase (1962 aa).

Residues 1-33 form the signal peptide; the sequence is MQRKKKGLSILLAGTVALGALAVLPVGEIQAKA. Residues 34 to 187 constitute a propeptide that is removed on maturation; the sequence is AISQQTKGSS…VTLAKVYYPT (154 aa). The Peptidase S8 domain maps to 191–697; sequence ANSMANVQAV…AGLVDVKAAI (507 aa). Residues D217, H281, and S620 each act as charge relay system in the active site. The disordered stretch occupies residues 1796–1938; that stretch reads GKGDGTTGTS…KTGETTERPA (143 aa). Positions 1797-1812 are enriched in gly residues; sequence KGDGTTGTSDKGGGQG. Polar residues-rich tracts occupy residues 1856–1865 and 1890–1903; these read RNGQLTSGTS and SQPSSGGNIPTNPA. The short motif at 1927–1931 is the LPXTG sorting signal element; the sequence is LPKTG. T1930 carries the pentaglycyl murein peptidoglycan amidated threonine modification. A propeptide spans 1931 to 1962 (removed by sortase); it reads GETTERPAFGFLGVIVVSLMGVLGLKRKQREE.

It belongs to the peptidase S8 family.

Its subcellular location is the secreted. The protein resides in the cell wall. The catalysed reaction is Endopeptidase activity with very broad specificity, although some subsite preference have been noted, e.g. large hydrophobic residues in the P1 and P4 positions, and Pro in the P2 position. Best known for its action on caseins, although it has been shown to hydrolyze hemoglobin and oxidized insulin B-chain.. Its function is as follows. Protease which breaks down milk proteins during the growth of the bacteria on milk. This is PIII-type proteinase (prtP) from Lactococcus lactis subsp. cremoris (strain SK11).